Here is a 352-residue protein sequence, read N- to C-terminus: Chorismate synthase (352 aa).

Residues Arg-48 and Arg-54 each contribute to the NADP(+) site. FMN-binding positions include 125 to 127 (RSS), 238 to 239 (NA), Gly-278, 293 to 297 (KPTSS), and Arg-319.

Belongs to the chorismate synthase family. Homotetramer. It depends on FMNH2 as a cofactor.

It catalyses the reaction 5-O-(1-carboxyvinyl)-3-phosphoshikimate = chorismate + phosphate. Its pathway is metabolic intermediate biosynthesis; chorismate biosynthesis; chorismate from D-erythrose 4-phosphate and phosphoenolpyruvate: step 7/7. Catalyzes the anti-1,4-elimination of the C-3 phosphate and the C-6 proR hydrogen from 5-enolpyruvylshikimate-3-phosphate (EPSP) to yield chorismate, which is the branch point compound that serves as the starting substrate for the three terminal pathways of aromatic amino acid biosynthesis. This reaction introduces a second double bond into the aromatic ring system. This Bordetella avium (strain 197N) protein is Chorismate synthase.